The following is a 217-amino-acid chain: Uridylate kinase (217 aa).

6–10 (KISGR) lines the ATP pocket. Gly38 contacts UMP. Gly39 and Arg43 together coordinate ATP. Residues Asp60 and 107–113 (FQPGQST) contribute to the UMP site. The ATP site is built by Asn134, Tyr139, and Asp142.

It belongs to the UMP kinase family. Homohexamer.

The protein resides in the cytoplasm. The enzyme catalyses UMP + ATP = UDP + ADP. It functions in the pathway pyrimidine metabolism; CTP biosynthesis via de novo pathway; UDP from UMP (UMPK route): step 1/1. Inhibited by UTP. Its function is as follows. Catalyzes the reversible phosphorylation of UMP to UDP. The protein is Uridylate kinase of Pyrobaculum arsenaticum (strain DSM 13514 / JCM 11321 / PZ6).